Consider the following 189-residue polypeptide: Glycerol-3-phosphate acyltransferase (189 aa).

The next 4 helical transmembrane spans lie at 1-21, 79-99, 113-133, and 151-171; these read MVWL…AILL, QQAW…YFNF, LGLY…VFAF, and LLAW…GVIV.

Belongs to the PlsY family. In terms of assembly, probably interacts with PlsX.

It localises to the cell inner membrane. It carries out the reaction an acyl phosphate + sn-glycerol 3-phosphate = a 1-acyl-sn-glycero-3-phosphate + phosphate. The protein operates within lipid metabolism; phospholipid metabolism. Functionally, catalyzes the transfer of an acyl group from acyl-phosphate (acyl-PO(4)) to glycerol-3-phosphate (G3P) to form lysophosphatidic acid (LPA). This enzyme utilizes acyl-phosphate as fatty acyl donor, but not acyl-CoA or acyl-ACP. The polypeptide is Glycerol-3-phosphate acyltransferase (Azotobacter vinelandii (strain DJ / ATCC BAA-1303)).